Consider the following 368-residue polypeptide: MRFPELEELKNRRTLKWTRFPEDVLPLWVAESDFGTCPQLKEAMADAVEREVFGYPPDATGLNDALTGFYERRYGFGPNPESVFAIPDVVRGLKLAIEHFTKPGSAIIVPLPAYPPFIELPKVTGRQAIYIDAHEYDLKEIEKAFADGAGSLLFCNPHNPLGTVFSEEYIRELTDIAAKYDARIIVDEIHAPLVYEGTHVVAAGVSENAANTCITITATSKAWNTAGLKCAQIFFSNEADVKAWKNLSDITRDGVSILGLIAAETVYNEGEEFLDESIQILKDNRDFAAAELEKLGVKVYAPDSTYLMWLDFAGTKIEEAPSKILREEGKVMLNDGAAFGGFTTCARLNFACSRETLEEGLRRIASVL.

Position 221 is an N6-(pyridoxal phosphate)lysine (K221).

Belongs to the class-II pyridoxal-phosphate-dependent aminotransferase family. MalY/PatB cystathionine beta-lyase subfamily. Pyridoxal 5'-phosphate is required as a cofactor.

It catalyses the reaction L,L-cystathionine + H2O = L-homocysteine + pyruvate + NH4(+). The enzyme catalyses an S-substituted L-cysteine + H2O = a thiol + pyruvate + NH4(+). It functions in the pathway amino-acid biosynthesis; L-methionine biosynthesis via de novo pathway; L-homocysteine from L-cystathionine: step 1/1. In terms of biological role, catalyzes the transformation of cystathionine to homocysteine. This Corynebacterium glutamicum (Brevibacterium saccharolyticum) protein is Cystathionine beta-lyase (metC).